The chain runs to 143 residues: Nucleoside diphosphate kinase (143 aa).

Lys-11, Phe-59, Arg-87, Thr-93, Arg-104, and Asn-114 together coordinate ATP. His-117 (pros-phosphohistidine intermediate) is an active-site residue.

Belongs to the NDK family. Homotetramer. Mg(2+) serves as cofactor.

It is found in the cytoplasm. The enzyme catalyses a 2'-deoxyribonucleoside 5'-diphosphate + ATP = a 2'-deoxyribonucleoside 5'-triphosphate + ADP. It catalyses the reaction a ribonucleoside 5'-diphosphate + ATP = a ribonucleoside 5'-triphosphate + ADP. In terms of biological role, major role in the synthesis of nucleoside triphosphates other than ATP. The ATP gamma phosphate is transferred to the NDP beta phosphate via a ping-pong mechanism, using a phosphorylated active-site intermediate. The polypeptide is Nucleoside diphosphate kinase (Pseudoalteromonas atlantica (strain T6c / ATCC BAA-1087)).